The primary structure comprises 750 residues: uncharacterized protein (750 aa).

This is an uncharacterized protein from Escherichia coli O157:H7.